A 248-amino-acid chain; its full sequence is Proteasome subunit alpha (248 aa).

Belongs to the peptidase T1A family. In terms of assembly, the 20S proteasome core is composed of 14 alpha and 14 beta subunits that assemble into four stacked heptameric rings, resulting in a barrel-shaped structure. The two inner rings, each composed of seven catalytic beta subunits, are sandwiched by two outer rings, each composed of seven alpha subunits. The catalytic chamber with the active sites is on the inside of the barrel. Has a gated structure, the ends of the cylinder being occluded by the N-termini of the alpha-subunits. Is capped at one or both ends by the proteasome regulatory ATPase, PAN.

Its subcellular location is the cytoplasm. With respect to regulation, the formation of the proteasomal ATPase PAN-20S proteasome complex, via the docking of the C-termini of PAN into the intersubunit pockets in the alpha-rings, triggers opening of the gate for substrate entry. Interconversion between the open-gate and close-gate conformations leads to a dynamic regulation of the 20S proteasome proteolysis activity. In terms of biological role, component of the proteasome core, a large protease complex with broad specificity involved in protein degradation. The protein is Proteasome subunit alpha of Methanothermobacter thermautotrophicus (strain ATCC 29096 / DSM 1053 / JCM 10044 / NBRC 100330 / Delta H) (Methanobacterium thermoautotrophicum).